The chain runs to 467 residues: ATP synthase subunit beta (467 aa).

157–164 is an ATP binding site; sequence GGAGVGKT.

This sequence belongs to the ATPase alpha/beta chains family. As to quaternary structure, F-type ATPases have 2 components, CF(1) - the catalytic core - and CF(0) - the membrane proton channel. CF(1) has five subunits: alpha(3), beta(3), gamma(1), delta(1), epsilon(1). CF(0) has three main subunits: a(1), b(2) and c(9-12). The alpha and beta chains form an alternating ring which encloses part of the gamma chain. CF(1) is attached to CF(0) by a central stalk formed by the gamma and epsilon chains, while a peripheral stalk is formed by the delta and b chains.

It localises to the cell inner membrane. It carries out the reaction ATP + H2O + 4 H(+)(in) = ADP + phosphate + 5 H(+)(out). Functionally, produces ATP from ADP in the presence of a proton gradient across the membrane. The catalytic sites are hosted primarily by the beta subunits. This Desulfosudis oleivorans (strain DSM 6200 / JCM 39069 / Hxd3) (Desulfococcus oleovorans) protein is ATP synthase subunit beta.